The chain runs to 280 residues: Large ribosomal subunit protein uL2 (280 aa).

2 disordered regions span residues 27 to 58 (STPEKSLVRPLHGHGGRNAHGRITTRHKGGGH) and 226 to 280 (MNPV…KHGR). Basic residues-rich tracts occupy residues 37 to 58 (LHGHGGRNAHGRITTRHKGGGH) and 268 to 280 (IVRRRRTGKKHGR).

This sequence belongs to the universal ribosomal protein uL2 family. Part of the 50S ribosomal subunit. Forms a bridge to the 30S subunit in the 70S ribosome.

One of the primary rRNA binding proteins. Required for association of the 30S and 50S subunits to form the 70S ribosome, for tRNA binding and peptide bond formation. It has been suggested to have peptidyltransferase activity; this is somewhat controversial. Makes several contacts with the 16S rRNA in the 70S ribosome. This is Large ribosomal subunit protein uL2 from Mycobacterium marinum (strain ATCC BAA-535 / M).